The chain runs to 300 residues: F-box associated domain-containing protein sdz-33 (300 aa).

In terms of domain architecture, F-box spans 5–51 (PFPILCLPDFVLQKSLKLMGVVEHLCLSILSKNIKQLIATLKGYPKC).

Expressed in D-type motor neuron cell bodies.

Functionally, substrate recognition component of E3 ubiquitin-protein ligase complex which mediates the ubiquitination and subsequent proteasomal degradation of target proteins such as mdl-1. Positively regulates axon regeneration by targeting mdl-1 for ubiquitin-mediated degradation; probably thereby reducing levels of mdl-1-mxl-1 heterodimers, allowing free mxl-1 to form complexes with tdpt-1 and thus inhibiting tdpt-1-dependent sumoylation of ets-4. The chain is F-box associated domain-containing protein sdz-33 from Caenorhabditis elegans.